Reading from the N-terminus, the 131-residue chain is Small ribosomal subunit protein eS8 (131 aa).

The segment at 15-36 (PSGGKKGRVRKTKKKALGGGPP) is disordered. Residues 17–30 (GGKKGRVRKTKKKA) show a composition bias toward basic residues.

The protein belongs to the eukaryotic ribosomal protein eS8 family. Part of the 30S ribosomal subunit.

The polypeptide is Small ribosomal subunit protein eS8 (Pyrobaculum calidifontis (strain DSM 21063 / JCM 11548 / VA1)).